The sequence spans 186 residues: Probable RNA 2'-phosphotransferase (186 aa).

This sequence belongs to the KptA/TPT1 family.

In terms of biological role, removes the 2'-phosphate from RNA via an intermediate in which the phosphate is ADP-ribosylated by NAD followed by a presumed transesterification to release the RNA and generate ADP-ribose 1''-2''-cyclic phosphate (APPR&gt;P). May function as an ADP-ribosylase. The chain is Probable RNA 2'-phosphotransferase from Agrobacterium fabrum (strain C58 / ATCC 33970) (Agrobacterium tumefaciens (strain C58)).